A 246-amino-acid chain; its full sequence is MMIIPALDLIDGTVVRLHQGDYGKQRDYGNDPLPRLQDYAAQGAEVLHLVDLTGAKDPAKRQIPLIKTLVAGVNVPVQVGGGVRSEEDVAALLEAGVARVVVGSTAVKSPEMVKGWFERFGADALVLALDVRIDEQGNKQVAVSGWQENSGVSLEQLVETYLPVGLKHVLCTDISRDGTLAGSNVSLYEEVCARYPQVAFQSSGGIGDINDVAALRGTGVRGVIVGRALLEGKFTVKEAIACWQNA.

The Proton acceptor role is filled by D8. D130 acts as the Proton donor in catalysis.

Belongs to the HisA/HisF family.

Its subcellular location is the cytoplasm. The enzyme catalyses 1-(5-phospho-beta-D-ribosyl)-5-[(5-phospho-beta-D-ribosylamino)methylideneamino]imidazole-4-carboxamide = 5-[(5-phospho-1-deoxy-D-ribulos-1-ylimino)methylamino]-1-(5-phospho-beta-D-ribosyl)imidazole-4-carboxamide. It functions in the pathway amino-acid biosynthesis; L-histidine biosynthesis; L-histidine from 5-phospho-alpha-D-ribose 1-diphosphate: step 4/9. The protein is 1-(5-phosphoribosyl)-5-[(5-phosphoribosylamino)methylideneamino] imidazole-4-carboxamide isomerase of Shigella dysenteriae serotype 1 (strain Sd197).